Consider the following 439-residue polypeptide: Ribosomal protein uS12 methylthiotransferase RimO (439 aa).

Residues Pro-5 to Pro-115 form the MTTase N-terminal domain. [4Fe-4S] cluster contacts are provided by Cys-14, Cys-50, Cys-79, Cys-146, Cys-150, and Cys-153. Residues Leu-132–Asp-369 form the Radical SAM core domain. One can recognise a TRAM domain in the interval Gln-372–Asp-439.

It belongs to the methylthiotransferase family. RimO subfamily. The cofactor is [4Fe-4S] cluster.

Its subcellular location is the cytoplasm. It carries out the reaction L-aspartate(89)-[ribosomal protein uS12]-hydrogen + (sulfur carrier)-SH + AH2 + 2 S-adenosyl-L-methionine = 3-methylsulfanyl-L-aspartate(89)-[ribosomal protein uS12]-hydrogen + (sulfur carrier)-H + 5'-deoxyadenosine + L-methionine + A + S-adenosyl-L-homocysteine + 2 H(+). Its function is as follows. Catalyzes the methylthiolation of an aspartic acid residue of ribosomal protein uS12. The sequence is that of Ribosomal protein uS12 methylthiotransferase RimO from Francisella philomiragia subsp. philomiragia (strain ATCC 25017 / CCUG 19701 / FSC 153 / O#319-036).